Reading from the N-terminus, the 409-residue chain is tRNA-specific 2-thiouridylase MnmA (409 aa).

ATP contacts are provided by residues 40 to 47 (GLSGGVDS) and leucine 66. The active-site Nucleophile is cysteine 127. A disulfide bond links cysteine 127 and cysteine 237. Glycine 152 is an ATP binding site. The segment at 187–189 (KDQ) is interaction with tRNA. The active-site Cysteine persulfide intermediate is cysteine 237. Residues 342 to 343 (RY) form an interaction with tRNA region.

This sequence belongs to the MnmA/TRMU family.

It is found in the cytoplasm. The enzyme catalyses S-sulfanyl-L-cysteinyl-[protein] + uridine(34) in tRNA + AH2 + ATP = 2-thiouridine(34) in tRNA + L-cysteinyl-[protein] + A + AMP + diphosphate + H(+). Its function is as follows. Catalyzes the 2-thiolation of uridine at the wobble position (U34) of tRNA, leading to the formation of s(2)U34. The chain is tRNA-specific 2-thiouridylase MnmA from Prochlorococcus marinus (strain MIT 9313).